A 391-amino-acid chain; its full sequence is 3-ketoacyl-CoA thiolase (391 aa).

Cys-95 serves as the catalytic Acyl-thioester intermediate. Active-site proton acceptor residues include His-347 and Cys-377.

This sequence belongs to the thiolase-like superfamily. Thiolase family. Heterotetramer of two alpha chains (FadB) and two beta chains (FadA).

The protein resides in the cytoplasm. It carries out the reaction an acyl-CoA + acetyl-CoA = a 3-oxoacyl-CoA + CoA. It participates in lipid metabolism; fatty acid beta-oxidation. Its function is as follows. Catalyzes the final step of fatty acid oxidation in which acetyl-CoA is released and the CoA ester of a fatty acid two carbons shorter is formed. This is 3-ketoacyl-CoA thiolase from Ectopseudomonas mendocina (strain ymp) (Pseudomonas mendocina).